The chain runs to 285 residues: Purine biosynthesis transcriptional repressor PurR (285 aa).

Residues 1–73 form a DNA binding domain region; the sequence is MKFRRSGRLV…GAAGGVKYIP (73 aa). Residues 74 to 285 form an effector binding domain region; the sequence is KMKQAEAEEF…NLLKNGETES (212 aa). Tyrosine 102 lines the guanosine 3',5'-bis(diphosphate) pocket. 5-phospho-alpha-D-ribose 1-diphosphate contacts are provided by alanine 138, threonine 139, lysine 140, and arginine 160. The guanosine 3',5'-bis(diphosphate) site is built by glycine 178 and serine 179. Residues aspartate 203, aspartate 204, phenylalanine 205, lysine 207, and alanine 208 each contribute to the 5-phospho-alpha-D-ribose 1-diphosphate site. Lysine 207 contributes to the guanosine 3',5'-bis(diphosphate) binding site. Residues glycine 209, glycine 210, and threonine 211 each contribute to the guanosine 3',5'-bis(diphosphate) site. Threonine 211 contributes to the 5-phospho-alpha-D-ribose 1-diphosphate binding site.

This sequence belongs to the purine/pyrimidine phosphoribosyltransferase family. PurR subfamily. In terms of assembly, homodimer.

Its activity is regulated as follows. The binding of PurR to DNA, and therefore the repressor activity, is influenced by interaction with the effector molecules 5-phosphoribosyl 1-pyrophosphate (PRPP) and (p)ppGpp. PRPP binds to PurR and reduces affinity of PurR for DNA, which inhibits the repressor activity and induces transcription of the target genes. On the contrary, (p)ppGpp enhances binding of PurR to DNA and repression of the transcription. PRPP and (p)ppGpp compete for PurR binding and allosteric control of transcription. ppGpp maintains PurR-DNA interaction and prevents PRPP from de-repressing PurR regulation during conditions that lead to (p)ppGpp induction, such as upon amino acid starvation. In terms of biological role, DNA-binding transcriptional repressor that controls the expression of a number of genes involved in the synthesis, metabolism and transport of purines. In response to a signal of excess adenine, represses the transcription of the pur operon, which encodes enzymes of the purine biosynthetic pathway. It also represses the expression of the purA and purR genes. In addition, controls the expression of several other genes or operons, which encode enzymes or transporters playing a role in purine nucleotide metabolism. Acts by binding directly to specific DNA sequences, named PurBoxes, in the upstream control regions of affected genes. Two PurBoxes are required for high-affinity PurR binding. Also responds to amino acid starvation via (p)ppGpp, which strongly increases PurR activity and repression of purine nucleotide biosynthesis genes. The chain is Purine biosynthesis transcriptional repressor PurR from Bacillus subtilis (strain 168).